A 633-amino-acid polypeptide reads, in one-letter code: MINITLPDGSRREFENPVSVMDVAQSIGAGLAKATIAGSVDGVLVDASDVIDHDASLRIITAKDEEGVEIIRHSSAHLVGHAVKQLYPDVKMVIGPVIAEGFYYDIYSERPFTPEDMAAIEKRMGELIAQDYDVIKKVTPRAEVIEIFKARGEDYKLRLIEDMSDDIQAMGMYYHQEYVDMCRGPHVPNTRFLKAFKLTRISGAYWRGDAQNEQLQRIYGTAWADKKQLEAYIKRIEEAEMRDHRRIGKQQDLFHLQEEAPGLVFWHPKGWALWQVVEQYMRKVYRKTGYGEVRCPQILDVSLWQKSGHWDNYQDAMFFTESEKRTYALKPMNCPGHVQVFNQGLHSYRDLPIRYGEFGACHRNEPSGALHGILRVRGFTQDDGHVFCTENQVEAEVTAFHQQALAVYQHFGFDEIQVKIALRPESRLGDDATWDKAEGALRSALSSNGVEWQELPGEGAFYGPKIEYHLKDAIGRTWQLGTMQVDFMMPGRLGAEYVDENSQKKHPVMLHRAIVGSMERFLGILIEHHAGQFPAWLAPTQVVVANITDAQAEYVSDVTKTLADQGFRVSADLRNEKIGYKIREHTLQRVPYLLVIGDREKENGAVAVRTRSGEDLGSMSLQAFIERLQAEGA.

Residues 1 to 61 (MINITLPDGS…DHDASLRIIT (61 aa)) form the TGS domain. The catalytic stretch occupies residues 243-534 (DHRRIGKQQD…LIEHHAGQFP (292 aa)). Residues cysteine 334, histidine 385, and histidine 511 each coordinate Zn(2+).

It belongs to the class-II aminoacyl-tRNA synthetase family. As to quaternary structure, homodimer. Zn(2+) is required as a cofactor.

Its subcellular location is the cytoplasm. The enzyme catalyses tRNA(Thr) + L-threonine + ATP = L-threonyl-tRNA(Thr) + AMP + diphosphate + H(+). Functionally, catalyzes the attachment of threonine to tRNA(Thr) in a two-step reaction: L-threonine is first activated by ATP to form Thr-AMP and then transferred to the acceptor end of tRNA(Thr). Also edits incorrectly charged L-seryl-tRNA(Thr). This is Threonine--tRNA ligase from Stenotrophomonas maltophilia (strain R551-3).